The sequence spans 674 residues: Primary amine oxidase (674 aa).

The signal sequence occupies residues 1–25 (MASTTTMRLALFSVLTLLSFHAVVS). Asn-156 is a glycosylation site (N-linked (GlcNAc...) asparagine). An intrachain disulfide couples Cys-162 to Cys-183. Residues 226 to 236 (ENTEYQVSKQS) are compositionally biased toward polar residues. A disordered region spans residues 226–251 (ENTEYQVSKQSPPFGPKQHSLTSHQP). 323–334 (FFDSGEFGFGLS) is a substrate binding site. Asp-325 (proton acceptor) is an active-site residue. Cys-344 and Cys-370 are disulfide-bonded. Asn-389 carries an N-linked (GlcNAc...) asparagine glycan. 409–414 (VGNYDN) is a substrate binding site. The active-site Schiff-base intermediate with substrate; via topaquinone is the Tyr-412. Tyr-412 carries the post-translational modification 2',4',5'-topaquinone. Cu cation is bound by residues His-467 and His-469. Mn(2+) contacts are provided by Asp-476, Phe-477, Asp-478, Asp-617, and Ile-618. Residue His-628 participates in Cu cation binding.

The protein belongs to the copper/topaquinone oxidase family. Homodimer. The cofactor is Cu cation. It depends on Mn(2+) as a cofactor. L-topaquinone serves as cofactor. Post-translationally, topaquinone (TPQ) is generated by copper-dependent autoxidation of a specific tyrosyl residue.

The catalysed reaction is a primary methyl amine + O2 + H2O = an aldehyde + H2O2 + NH4(+). This Pisum sativum (Garden pea) protein is Primary amine oxidase.